Reading from the N-terminus, the 214-residue chain is Coiled-coil domain-containing protein 169 (214 aa).

Positions 56-138 form a coiled coil; it reads SEWKTRYETQ…YAFRLEQESK (83 aa). The interval 154-214 is disordered; that stretch reads MTQVSGSNQV…RSNHLPKLNP (61 aa). Composition is skewed to polar residues over residues 155 to 166 and 185 to 195; these read TQVSGSNQVSKR and HNSMNQKTTNA.

It belongs to the CCDC169 family.

The polypeptide is Coiled-coil domain-containing protein 169 (Ccdc169) (Mus musculus (Mouse)).